A 68-amino-acid chain; its full sequence is Small ribosomal subunit protein bS21 (68 aa).

Belongs to the bacterial ribosomal protein bS21 family.

This chain is Small ribosomal subunit protein bS21, found in Ruegeria sp. (strain TM1040) (Silicibacter sp.).